We begin with the raw amino-acid sequence, 611 residues long: Phosphomethylpyrimidine synthase (611 aa).

Residues N218, M247, Y276, H312, S332–G334, D373–R376, and E412 contribute to the substrate site. Position 416 (H416) interacts with Zn(2+). Y439 is a binding site for substrate. Zn(2+) is bound at residue H480. Residues C560, C563, and C568 each contribute to the [4Fe-4S] cluster site.

The protein belongs to the ThiC family. In terms of assembly, homodimer. [4Fe-4S] cluster is required as a cofactor.

The catalysed reaction is 5-amino-1-(5-phospho-beta-D-ribosyl)imidazole + S-adenosyl-L-methionine = 4-amino-2-methyl-5-(phosphooxymethyl)pyrimidine + CO + 5'-deoxyadenosine + formate + L-methionine + 3 H(+). The protein operates within cofactor biosynthesis; thiamine diphosphate biosynthesis. Catalyzes the synthesis of the hydroxymethylpyrimidine phosphate (HMP-P) moiety of thiamine from aminoimidazole ribotide (AIR) in a radical S-adenosyl-L-methionine (SAM)-dependent reaction. The chain is Phosphomethylpyrimidine synthase from Caulobacter sp. (strain K31).